A 264-amino-acid polypeptide reads, in one-letter code: tRNA (guanine-N(1)-)-methyltransferase (264 aa).

S-adenosyl-L-methionine contacts are provided by residues glycine 125 and leucine 145–leucine 150.

Belongs to the RNA methyltransferase TrmD family. As to quaternary structure, homodimer.

It localises to the cytoplasm. It carries out the reaction guanosine(37) in tRNA + S-adenosyl-L-methionine = N(1)-methylguanosine(37) in tRNA + S-adenosyl-L-homocysteine + H(+). Its function is as follows. Specifically methylates guanosine-37 in various tRNAs. In Burkholderia multivorans (strain ATCC 17616 / 249), this protein is tRNA (guanine-N(1)-)-methyltransferase.